Consider the following 208-residue polypeptide: Small ribosomal subunit protein uS4 (208 aa).

The 63-residue stretch at 98-160 (RRLDNVVYRM…SKNNVQIQRA (63 aa)) folds into the S4 RNA-binding domain.

The protein belongs to the universal ribosomal protein uS4 family. Part of the 30S ribosomal subunit. Contacts protein S5. The interaction surface between S4 and S5 is involved in control of translational fidelity.

Its function is as follows. One of the primary rRNA binding proteins, it binds directly to 16S rRNA where it nucleates assembly of the body of the 30S subunit. In terms of biological role, with S5 and S12 plays an important role in translational accuracy. The polypeptide is Small ribosomal subunit protein uS4 (Nautilia profundicola (strain ATCC BAA-1463 / DSM 18972 / AmH)).